Reading from the N-terminus, the 203-residue chain is tRNA (guanine-N(7)-)-methyltransferase (203 aa).

S-adenosyl-L-methionine is bound by residues Glu34, Glu59, Asp86, and Asp107. Asp107 is a catalytic residue. Residues Lys111, Asp143, and 181-184 (TSYE) each bind substrate.

Belongs to the class I-like SAM-binding methyltransferase superfamily. TrmB family.

It catalyses the reaction guanosine(46) in tRNA + S-adenosyl-L-methionine = N(7)-methylguanosine(46) in tRNA + S-adenosyl-L-homocysteine. The protein operates within tRNA modification; N(7)-methylguanine-tRNA biosynthesis. In terms of biological role, catalyzes the formation of N(7)-methylguanine at position 46 (m7G46) in tRNA. The protein is tRNA (guanine-N(7)-)-methyltransferase of Mycoplasmopsis pulmonis (strain UAB CTIP) (Mycoplasma pulmonis).